The primary structure comprises 137 residues: Large ribosomal subunit protein uL16 (137 aa).

It belongs to the universal ribosomal protein uL16 family. As to quaternary structure, part of the 50S ribosomal subunit.

Binds 23S rRNA and is also seen to make contacts with the A and possibly P site tRNAs. This is Large ribosomal subunit protein uL16 from Acinetobacter baumannii (strain SDF).